The chain runs to 229 residues: Urease accessory protein UreF (229 aa).

This sequence belongs to the UreF family. As to quaternary structure, ureD, UreF and UreG form a complex that acts as a GTP-hydrolysis-dependent molecular chaperone, activating the urease apoprotein by helping to assemble the nickel containing metallocenter of UreC. The UreE protein probably delivers the nickel.

It localises to the cytoplasm. In terms of biological role, required for maturation of urease via the functional incorporation of the urease nickel metallocenter. The chain is Urease accessory protein UreF from Ralstonia pickettii (strain 12J).